We begin with the raw amino-acid sequence, 557 residues long: Dihydroxy-acid dehydratase (557 aa).

Aspartate 78 is a Mg(2+) binding site. [2Fe-2S] cluster is bound at residue cysteine 119. 2 residues coordinate Mg(2+): aspartate 120 and lysine 121. Lysine 121 is modified (N6-carboxylysine). Cysteine 192 is a [2Fe-2S] cluster binding site. A Mg(2+)-binding site is contributed by glutamate 443. The active-site Proton acceptor is serine 469.

The protein belongs to the IlvD/Edd family. Homodimer. It depends on [2Fe-2S] cluster as a cofactor. Mg(2+) is required as a cofactor.

It catalyses the reaction (2R)-2,3-dihydroxy-3-methylbutanoate = 3-methyl-2-oxobutanoate + H2O. The enzyme catalyses (2R,3R)-2,3-dihydroxy-3-methylpentanoate = (S)-3-methyl-2-oxopentanoate + H2O. The protein operates within amino-acid biosynthesis; L-isoleucine biosynthesis; L-isoleucine from 2-oxobutanoate: step 3/4. It participates in amino-acid biosynthesis; L-valine biosynthesis; L-valine from pyruvate: step 3/4. Functionally, functions in the biosynthesis of branched-chain amino acids. Catalyzes the dehydration of (2R,3R)-2,3-dihydroxy-3-methylpentanoate (2,3-dihydroxy-3-methylvalerate) into 2-oxo-3-methylpentanoate (2-oxo-3-methylvalerate) and of (2R)-2,3-dihydroxy-3-methylbutanoate (2,3-dihydroxyisovalerate) into 2-oxo-3-methylbutanoate (2-oxoisovalerate), the penultimate precursor to L-isoleucine and L-valine, respectively. The sequence is that of Dihydroxy-acid dehydratase from Persephonella marina (strain DSM 14350 / EX-H1).